The chain runs to 391 residues: MTSVVADSLTETKTDSQKPIATRKDGRIDLLGLSREDIRAALKSKGLDEKQAKLRTKQLWHWMYNRGAVAFDGMTDIAKTMRPWLAEHFAISRPEVVTMQISTDGTRKWLLKTDDGYDYEMVFIPDADRGTLCISSQIGCTLNCRFCNTGTMRLVRNLTVGEIVGQIMLARDSLDEWPSKPEGRLLTNVVMMGMGEPLYNFDNVRDALKLVMDGDGIALSRRRITLSTSGVVPMMARAGEEIGVNLAVSLHAVTKVVRDEIVPINKKYGIDELLAACAAYPGVNNARRITFEYVMLKDKNDSEEDAHELVRLLQYYRLPAKVNLIPFNPWPNSPYECSTPERIARFSEIVFNAGISAPVRRTRGQDIMAACGQLKSAAERQSKRDSMITLS.

The disordered stretch occupies residues 1–20 (MTSVVADSLTETKTDSQKPI). Positions 10 to 20 (TETKTDSQKPI) are enriched in basic and acidic residues. The active-site Proton acceptor is E120. The 241-residue stretch at 126–366 (DADRGTLCIS…APVRRTRGQD (241 aa)) folds into the Radical SAM core domain. C133 and C371 are disulfide-bonded. Positions 140, 144, and 147 each coordinate [4Fe-4S] cluster. S-adenosyl-L-methionine is bound by residues 195 to 196 (GE), S227, 249 to 251 (SLH), and N328. C371 (S-methylcysteine intermediate) is an active-site residue.

This sequence belongs to the radical SAM superfamily. RlmN family. The cofactor is [4Fe-4S] cluster.

The protein resides in the cytoplasm. It carries out the reaction adenosine(2503) in 23S rRNA + 2 reduced [2Fe-2S]-[ferredoxin] + 2 S-adenosyl-L-methionine = 2-methyladenosine(2503) in 23S rRNA + 5'-deoxyadenosine + L-methionine + 2 oxidized [2Fe-2S]-[ferredoxin] + S-adenosyl-L-homocysteine. The enzyme catalyses adenosine(37) in tRNA + 2 reduced [2Fe-2S]-[ferredoxin] + 2 S-adenosyl-L-methionine = 2-methyladenosine(37) in tRNA + 5'-deoxyadenosine + L-methionine + 2 oxidized [2Fe-2S]-[ferredoxin] + S-adenosyl-L-homocysteine. Functionally, specifically methylates position 2 of adenine 2503 in 23S rRNA and position 2 of adenine 37 in tRNAs. m2A2503 modification seems to play a crucial role in the proofreading step occurring at the peptidyl transferase center and thus would serve to optimize ribosomal fidelity. In Zymomonas mobilis subsp. mobilis (strain ATCC 31821 / ZM4 / CP4), this protein is Dual-specificity RNA methyltransferase RlmN.